Here is a 450-residue protein sequence, read N- to C-terminus: MLAVAVLAAGKGTRMKSALPKVLQPLAGATLVERVLASAGNLQPERRLLIVGHQAERVEQQLAPLGGLEFVLQQPQNGTGHAVQQLIPSLQGFEGELLVLNGDVPLLRSETVEALVEQHRASGADVTLLTARLEDPTGYGRVFADADGQVSSIIEHRDCTDEQRSNNLTNAGIYCFNWTALANVLPKLSTDNDQGELYLTDTVAMLPKAMHLEVADADEVNGINNRRQLAQCEALLQQRLRHHWMDEGVTFIDPESCTLSEGCSFGRDVVIDPQTHFRGRCVIGDNSRIGPGSLIEDASVGTNVSVVHSVVREASIGNDVAIGPFAHLRPAADVGDGCRIGNFVEVKKSQLGAGTKVNHLSYIGDAQLGEKVNVGAGTITANYDGVNKHRTMIGSNSKTGANSVLVAPINVGERATIGAGSTITKDVADGALAIGRARQMTKEGWAERKV.

The segment at M1 to R226 is pyrophosphorylase. UDP-N-acetyl-alpha-D-glucosamine contacts are provided by residues L7–G10, K21, Q73, and G78–T79. Mg(2+) is bound at residue D103. UDP-N-acetyl-alpha-D-glucosamine contacts are provided by G140, E155, N170, and N224. N224 is a Mg(2+) binding site. The tract at residues R227 to E247 is linker. The interval G248 to V450 is N-acetyltransferase. UDP-N-acetyl-alpha-D-glucosamine is bound by residues R329 and K347. Catalysis depends on H359, which acts as the Proton acceptor. Residues Y362 and N373 each contribute to the UDP-N-acetyl-alpha-D-glucosamine site. Acetyl-CoA-binding positions include A376, N382 to Y383, A419, and R436.

It in the N-terminal section; belongs to the N-acetylglucosamine-1-phosphate uridyltransferase family. In the C-terminal section; belongs to the transferase hexapeptide repeat family. As to quaternary structure, homotrimer. The cofactor is Mg(2+).

Its subcellular location is the cytoplasm. It catalyses the reaction alpha-D-glucosamine 1-phosphate + acetyl-CoA = N-acetyl-alpha-D-glucosamine 1-phosphate + CoA + H(+). It carries out the reaction N-acetyl-alpha-D-glucosamine 1-phosphate + UTP + H(+) = UDP-N-acetyl-alpha-D-glucosamine + diphosphate. It participates in nucleotide-sugar biosynthesis; UDP-N-acetyl-alpha-D-glucosamine biosynthesis; N-acetyl-alpha-D-glucosamine 1-phosphate from alpha-D-glucosamine 6-phosphate (route II): step 2/2. The protein operates within nucleotide-sugar biosynthesis; UDP-N-acetyl-alpha-D-glucosamine biosynthesis; UDP-N-acetyl-alpha-D-glucosamine from N-acetyl-alpha-D-glucosamine 1-phosphate: step 1/1. It functions in the pathway bacterial outer membrane biogenesis; LPS lipid A biosynthesis. Its function is as follows. Catalyzes the last two sequential reactions in the de novo biosynthetic pathway for UDP-N-acetylglucosamine (UDP-GlcNAc). The C-terminal domain catalyzes the transfer of acetyl group from acetyl coenzyme A to glucosamine-1-phosphate (GlcN-1-P) to produce N-acetylglucosamine-1-phosphate (GlcNAc-1-P), which is converted into UDP-GlcNAc by the transfer of uridine 5-monophosphate (from uridine 5-triphosphate), a reaction catalyzed by the N-terminal domain. This chain is Bifunctional protein GlmU, found in Synechococcus sp. (strain CC9605).